A 661-amino-acid chain; its full sequence is Arginine--tRNA ligase, cytoplasmic (661 aa).

At Met1 the chain carries N-acetylmethionine. Residues 1–73 (MDGLVAQCSA…AEKRRRPTKN (73 aa)) are could be involved in the assembly of the multisynthetase complex. Residues 201-203 (SPN), His212, Tyr385, Asp389, and Gln413 contribute to the L-arginine site. A 'HIGH' region motif is present at residues 202-213 (PNIAKEMHVGHL). The segment at 530 to 544 (NTAAYLLYAFTRIRS) is interaction with tRNA.

Belongs to the class-I aminoacyl-tRNA synthetase family. As to quaternary structure, interacts (via N-terminus) with AIMP1 (via N-terminus); this stimulates its catalytic activity. Interacts (via N-terminus) with LARS2 (via C-terminus). Monomer. Part of a multisubunit complex that groups tRNA ligases for Arg (RARS1), Asp (DARS1), Gln (QARS1), Ile (IARS1), Leu (LARS1), Lys (KARS1), Met (MARS1) the bifunctional ligase for Glu and Pro (EPRS1) and the auxiliary subunits AIMP1/p43, AIMP2/p38 and EEF1E1/p18. Interacts with QARS1. Part of a complex composed of RARS1, QARS1 and AIMP1.

The protein resides in the cytoplasm. It localises to the cytosol. The catalysed reaction is tRNA(Arg) + L-arginine + ATP = L-arginyl-tRNA(Arg) + AMP + diphosphate. Functionally, forms part of a macromolecular complex that catalyzes the attachment of specific amino acids to cognate tRNAs during protein synthesis. Modulates the secretion of AIMP1 and may be involved in generation of the inflammatory cytokine EMAP2 from AIMP1. The chain is Arginine--tRNA ligase, cytoplasmic (RARS1) from Cricetulus griseus (Chinese hamster).